Consider the following 49-residue polypeptide: Large ribosomal subunit protein bL33 (49 aa).

Belongs to the bacterial ribosomal protein bL33 family.

This is Large ribosomal subunit protein bL33 from Leuconostoc citreum (strain KM20).